Here is a 189-residue protein sequence, read N- to C-terminus: dCTP deaminase (189 aa).

Residues 112–117 (KSTYAR), 136–138 (TLE), glutamine 157, tyrosine 171, and glutamine 181 contribute to the dCTP site. Glutamate 138 functions as the Proton donor/acceptor in the catalytic mechanism.

It belongs to the dCTP deaminase family. Homotrimer.

It catalyses the reaction dCTP + H2O + H(+) = dUTP + NH4(+). It participates in pyrimidine metabolism; dUMP biosynthesis; dUMP from dCTP (dUTP route): step 1/2. Catalyzes the deamination of dCTP to dUTP. The chain is dCTP deaminase from Acinetobacter baylyi (strain ATCC 33305 / BD413 / ADP1).